The chain runs to 424 residues: UDP-N-acetylglucosamine 1-carboxyvinyltransferase (424 aa).

Phosphoenolpyruvate is bound at residue 22–23 (KN). Arginine 93 serves as a coordination point for UDP-N-acetyl-alpha-D-glucosamine. Residue cysteine 117 is the Proton donor of the active site. Position 117 is a 2-(S-cysteinyl)pyruvic acid O-phosphothioketal (cysteine 117). UDP-N-acetyl-alpha-D-glucosamine-binding positions include 122-126 (RPVDL), 162-165 (KVSV), aspartate 307, and isoleucine 329.

This sequence belongs to the EPSP synthase family. MurA subfamily.

Its subcellular location is the cytoplasm. It catalyses the reaction phosphoenolpyruvate + UDP-N-acetyl-alpha-D-glucosamine = UDP-N-acetyl-3-O-(1-carboxyvinyl)-alpha-D-glucosamine + phosphate. It functions in the pathway cell wall biogenesis; peptidoglycan biosynthesis. In terms of biological role, cell wall formation. Adds enolpyruvyl to UDP-N-acetylglucosamine. This Haemophilus influenzae (strain 86-028NP) protein is UDP-N-acetylglucosamine 1-carboxyvinyltransferase.